The primary structure comprises 142 residues: uncharacterized protein (142 aa).

Residues 70–94 (PKSVSNSKKKKEKAEKGLLRPTTKP) are disordered. The segment covering 81-94 (EKAEKGLLRPTTKP) has biased composition (basic and acidic residues).

This is an uncharacterized protein from Bacillus subtilis (strain 168).